The primary structure comprises 282 residues: Dihydropteroate synthase (282 aa).

Positions 15 to 267 constitute a Pterin-binding domain; it reads PHVMGILNVT…DVKETVEAMR (253 aa). Asn-22 provides a ligand contact to Mg(2+). Residues Thr-62, Asp-96, Asn-115, Asp-185, Lys-221, and 255-257 contribute to the (7,8-dihydropterin-6-yl)methyl diphosphate site; that span reads RVH.

It belongs to the DHPS family. Homodimer. It depends on Mg(2+) as a cofactor.

It carries out the reaction (7,8-dihydropterin-6-yl)methyl diphosphate + 4-aminobenzoate = 7,8-dihydropteroate + diphosphate. The protein operates within cofactor biosynthesis; tetrahydrofolate biosynthesis; 7,8-dihydrofolate from 2-amino-4-hydroxy-6-hydroxymethyl-7,8-dihydropteridine diphosphate and 4-aminobenzoate: step 1/2. In terms of biological role, catalyzes the condensation of para-aminobenzoate (pABA) with 6-hydroxymethyl-7,8-dihydropterin diphosphate (DHPt-PP) to form 7,8-dihydropteroate (H2Pte), the immediate precursor of folate derivatives. This is Dihydropteroate synthase (folP) from Shigella flexneri.